The following is a 763-amino-acid chain: Phosphoglycerol transferase I (763 aa).

A run of 4 helical transmembrane segments spans residues 4–19 (LLSFALFLASVLIYAW), 26–48 (WWFAATLTVLGLFVVLNITLFAS), 76–98 (YILPGIGIVLGLTAVFGALGWIL), and 105–127 (PHHFGYSLLALLLALGSVDASPA).

It belongs to the OpgB family.

The protein resides in the cell inner membrane. It carries out the reaction a phosphatidylglycerol + a membrane-derived-oligosaccharide D-glucose = a 1,2-diacyl-sn-glycerol + a membrane-derived-oligosaccharide 6-(glycerophospho)-D-glucose.. It participates in glycan metabolism; osmoregulated periplasmic glucan (OPG) biosynthesis. Transfers a phosphoglycerol residue from phosphatidylglycerol to the membrane-bound nascent glucan backbones. The sequence is that of Phosphoglycerol transferase I from Shigella flexneri.